Consider the following 229-residue polypeptide: MASALEELQKDLEEVKVLLEKSTRKRLRDTLTNEKSKIETELRNKMQQKSQKKPEFDNEKPAAVVAPLTTGYTVKISNYGWDQSDKFVKIYITLTGVHQVPAENVQVHFTERSFDLLVKNLNGKNYSMIVNNLLKPISVESSSKKVKTDTVIILCRKKAENTRWDYLTQVEKECKEKEKPSYDTEADPSEGLMNVLKKIYEDGDDDMKRTINKAWVESREKQAREDTEF.

Ala-2 is subject to N-acetylalanine. The interval 2 to 81 (ASALEELQKD…YTVKISNYGW (80 aa)) is interaction with SIAH1. Residue Ser-3 is modified to Phosphoserine. An N6-acetyllysine mark is found at Lys-10 and Lys-21. A Phosphoserine modification is found at Ser-36. The tract at residues 38–59 (IETELRNKMQQKSQKKPEFDNE) is disordered. The CS domain occupies 74 to 168 (VKISNYGWDQ…AENTRWDYLT (95 aa)). Residues 74–229 (VKISNYGWDQ…EKQAREDTEF (156 aa)) form an interaction with SKP1 region. Lys-86 and Lys-119 each carry N6-acetyllysine. Residues 155–229 (CRKKAENTRW…EKQAREDTEF (75 aa)) form an interaction with S100A6 region. An SGS domain is found at 169-229 (QVEKECKEKE…EKQAREDTEF (61 aa)).

As to quaternary structure, component of some large E3 complex at least composed of UBE2D1, SIAH1, CACYBP/SIP, SKP1, APC and TBL1X. Interacts directly with SIAH1, SIAH2 and SKP1. Interacts with protein of the S100 family S100A1, S100A6, S100B, S100P and S100A12 in a calcium-dependent manner. Post-translationally, phosphorylated on serine residues. Phosphorylated upon induction by RA or at high calcium concentrations.

It is found in the nucleus. Its subcellular location is the cytoplasm. Its function is as follows. May be involved in calcium-dependent ubiquitination and subsequent proteasomal degradation of target proteins. Probably serves as a molecular bridge in ubiquitin E3 complexes. Participates in the ubiquitin-mediated degradation of beta-catenin (CTNNB1). The chain is Calcyclin-binding protein (Cacybp) from Rattus norvegicus (Rat).